The chain runs to 449 residues: Phosphoglucosamine mutase (449 aa).

The active-site Phosphoserine intermediate is Ser-101. Mg(2+)-binding residues include Ser-101, Asp-242, Asp-244, and Asp-246. Ser-101 is modified (phosphoserine).

Belongs to the phosphohexose mutase family. It depends on Mg(2+) as a cofactor. Activated by phosphorylation.

It catalyses the reaction alpha-D-glucosamine 1-phosphate = D-glucosamine 6-phosphate. Its function is as follows. Catalyzes the conversion of glucosamine-6-phosphate to glucosamine-1-phosphate. The chain is Phosphoglucosamine mutase from Methylocella silvestris (strain DSM 15510 / CIP 108128 / LMG 27833 / NCIMB 13906 / BL2).